A 419-amino-acid chain; its full sequence is tRNA(Ile)-lysidine synthase (419 aa).

31–36 serves as a coordination point for ATP; sequence SGGGDS.

Belongs to the tRNA(Ile)-lysidine synthase family.

The protein resides in the cytoplasm. It carries out the reaction cytidine(34) in tRNA(Ile2) + L-lysine + ATP = lysidine(34) in tRNA(Ile2) + AMP + diphosphate + H(+). In terms of biological role, ligates lysine onto the cytidine present at position 34 of the AUA codon-specific tRNA(Ile) that contains the anticodon CAU, in an ATP-dependent manner. Cytidine is converted to lysidine, thus changing the amino acid specificity of the tRNA from methionine to isoleucine. The sequence is that of tRNA(Ile)-lysidine synthase from Ruegeria pomeroyi (strain ATCC 700808 / DSM 15171 / DSS-3) (Silicibacter pomeroyi).